The sequence spans 120 residues: MFLLSGYEYFLGFLLIAAAVPILALVTNLIVAPKGRNGERKLTYESGMEPIGGAWIQFNIRYYMFALVFVIFDVETVFLYPWAVAFNRLGLLAFIEALIFIAILVIALAYAWRKGALEWS.

3 consecutive transmembrane segments (helical) span residues 10–30, 64–84, and 89–109; these read FLGF…TNLI, MFAL…PWAV, and LGLL…IALA.

Belongs to the complex I subunit 3 family. In terms of assembly, NDH-1 can be composed of about 15 different subunits; different subcomplexes with different compositions have been identified which probably have different functions.

The protein resides in the cellular thylakoid membrane. The enzyme catalyses a plastoquinone + NADH + (n+1) H(+)(in) = a plastoquinol + NAD(+) + n H(+)(out). The catalysed reaction is a plastoquinone + NADPH + (n+1) H(+)(in) = a plastoquinol + NADP(+) + n H(+)(out). In terms of biological role, NDH-1 shuttles electrons from an unknown electron donor, via FMN and iron-sulfur (Fe-S) centers, to quinones in the respiratory and/or the photosynthetic chain. The immediate electron acceptor for the enzyme in this species is believed to be plastoquinone. Couples the redox reaction to proton translocation, and thus conserves the redox energy in a proton gradient. Cyanobacterial NDH-1 also plays a role in inorganic carbon-concentration. The protein is NAD(P)H-quinone oxidoreductase subunit 3 of Prochlorococcus marinus (strain MIT 9215).